A 318-amino-acid polypeptide reads, in one-letter code: Olfactory receptor 13C9 (318 aa).

Residues 1-25 (MEWENQTILVEFFLKGHSVHPRLEL) are Extracellular-facing. N-linked (GlcNAc...) asparagine glycosylation is present at N5. A helical membrane pass occupies residues 26 to 46 (LFFVLIFIMYVVILLGNGTLI). The Cytoplasmic portion of the chain corresponds to 47–54 (LISILDPH). A helical membrane pass occupies residues 55–75 (LHTPMYFFLGNLSFLDICYTT). Over 76 to 99 (TSIPSTLVSFLSERKTISFSGCAV) the chain is Extracellular. A disulfide bond links C97 and C189. A helical transmembrane segment spans residues 100–120 (QMFLGLAMGTTECVLLGMMAF). At 121–139 (DRYVAICNPLRYPIIMSKN) the chain is on the cytoplasmic side. Residues 140 to 160 (AYVPMAVGSWFAGIVNSAVQT) traverse the membrane as a helical segment. Over 161 to 197 (TFVVQLPFCRKNVINHFSCEILAVMKLACADISGNEF) the chain is Extracellular. A helical transmembrane segment spans residues 198-217 (LMLVATILFTLMPLLLIVIS). Residues 218 to 237 (YSLIISSILKIHSSEGRSKA) are Cytoplasmic-facing. A helical membrane pass occupies residues 238 to 258 (FSTCSAHLTVVIIFYGTILFM). Residues 259-277 (YMKPKSKETLNSDDLDATD) are Extracellular-facing. The chain crosses the membrane as a helical span at residues 278 to 298 (KIISMFYGVMTPMMNPLIYSL). Over 299-318 (RNKDVKEAVKHLPNRRFFSK) the chain is Cytoplasmic.

Belongs to the G-protein coupled receptor 1 family.

The protein localises to the cell membrane. Functionally, odorant receptor. The chain is Olfactory receptor 13C9 (OR13C9) from Homo sapiens (Human).